Here is a 451-residue protein sequence, read N- to C-terminus: MKHVKNFENKKVLVLGLARSGEAAARLLAKLGAIVTVNDGKPFDENPSAQALLEEGIKVICGSHPLELLDEAFAYMVKNPGIPYTNPMVVRALEKNIPVITEVELAYLISEAPIIGITGSNGKTTTTTMIADVLNHAGQSARLSGNIGFPASEVAQPVTEKDILVMELSSFQLMGTESFHPHMAVITNLMPTHIDYHGSFENYIEAKWNIQKNMTKEDFLVLNFNQDLAKDLANQTQAKIIPFSTKEKVDGAYLDGQMLCFKGQAIMSASELGVPGSHNVENALATIAVAKLSGVSNEAIRETLIHFGGVKHRLQSLGNIAGVKFYNDSKSTNILATQKALSGFDNSKVILIAGGLDRGNEFDELVPDIKGLKKMIILGESAPRLKHAAVQAGVTYLNAKDVAQATRIAFQEASPGDVVLLSPANASWDMYKNFEVRGDEFITTFKSLKGE.

119 to 125 contacts ATP; it reads GSNGKTT.

Belongs to the MurCDEF family.

The protein localises to the cytoplasm. It carries out the reaction UDP-N-acetyl-alpha-D-muramoyl-L-alanine + D-glutamate + ATP = UDP-N-acetyl-alpha-D-muramoyl-L-alanyl-D-glutamate + ADP + phosphate + H(+). Its pathway is cell wall biogenesis; peptidoglycan biosynthesis. Cell wall formation. Catalyzes the addition of glutamate to the nucleotide precursor UDP-N-acetylmuramoyl-L-alanine (UMA). The sequence is that of UDP-N-acetylmuramoylalanine--D-glutamate ligase from Streptococcus mutans serotype c (strain ATCC 700610 / UA159).